Here is a 115-residue protein sequence, read N- to C-terminus: NAD(P)H-quinone oxidoreductase subunit M (115 aa).

Belongs to the complex I NdhM subunit family. NDH-1 can be composed of about 15 different subunits; different subcomplexes with different compositions have been identified which probably have different functions.

The protein localises to the cellular thylakoid membrane. The enzyme catalyses a plastoquinone + NADH + (n+1) H(+)(in) = a plastoquinol + NAD(+) + n H(+)(out). The catalysed reaction is a plastoquinone + NADPH + (n+1) H(+)(in) = a plastoquinol + NADP(+) + n H(+)(out). NDH-1 shuttles electrons from an unknown electron donor, via FMN and iron-sulfur (Fe-S) centers, to quinones in the respiratory and/or the photosynthetic chain. The immediate electron acceptor for the enzyme in this species is believed to be plastoquinone. Couples the redox reaction to proton translocation, and thus conserves the redox energy in a proton gradient. Cyanobacterial NDH-1 also plays a role in inorganic carbon-concentration. The protein is NAD(P)H-quinone oxidoreductase subunit M of Prochlorococcus marinus subsp. pastoris (strain CCMP1986 / NIES-2087 / MED4).